The sequence spans 151 residues: Cell division protein SepF (151 aa).

Residues 17–29 are compositionally biased toward acidic residues; the sequence is DNEDDYQDQEDEQ. Positions 17-42 are disordered; that stretch reads DNEDDYQDQEDEQAQQPAPEQPVDNH.

This sequence belongs to the SepF family. As to quaternary structure, homodimer. Interacts with FtsZ.

It localises to the cytoplasm. Functionally, cell division protein that is part of the divisome complex and is recruited early to the Z-ring. Probably stimulates Z-ring formation, perhaps through the cross-linking of FtsZ protofilaments. Its function overlaps with FtsA. The sequence is that of Cell division protein SepF from Lacticaseibacillus casei (strain BL23) (Lactobacillus casei).